The primary structure comprises 148 residues: Large ribosomal subunit protein uL15 (148 aa).

Over residues 1–30 the composition is skewed to basic residues; sequence MSTHKKKTRKLRGHVSHGHGRIGKHRKHPG. Residues 1–37 are disordered; the sequence is MSTHKKKTRKLRGHVSHGHGRIGKHRKHPGGRGNAGG.

It belongs to the universal ribosomal protein uL15 family.

This is Large ribosomal subunit protein uL15 (RpL27A) from Tenebrio molitor (Yellow mealworm beetle).